The chain runs to 313 residues: WD repeat-containing protein 82 (313 aa).

WD repeat units lie at residues 19–58, 105–144, 146–184, 192–231, 236–276, and 280–313; these read ENSD…PKRT, GHSK…CQGL, HLQG…KGPF, DRTC…VMHT, NNSK…KVAV, and KHTG…TIDD.

The protein belongs to the WD repeat SWD2 family. Component of the SET1/COMPASS complex. Component of the PNUTS-PP1 phosphatase complex.

It localises to the nucleus. The protein resides in the chromosome. It is found in the cytoplasm. Regulatory component of the SET1/COMPASS complex implicated in the tethering of this complex to transcriptional start sites of active genes. Facilitates histone H3 'Lys-4' methylation (H3K4me) via recruitment of the SETD1A or SETD1B to the 'Ser-5' phosphorylated C-terminal domain (CTD) of RNA polymerase II large subunit (POLR2A). Component of the PNUTS-PP1 protein phosphatase complex, a protein phosphatase 1 (PP1) complex that promotes RNA polymerase II transcription pause-release, allowing transcription elongation. In Xenopus tropicalis (Western clawed frog), this protein is WD repeat-containing protein 82 (wdr82).